Consider the following 507-residue polypeptide: Maturase K (507 aa).

It belongs to the intron maturase 2 family. MatK subfamily.

Its subcellular location is the plastid. It is found in the chloroplast. Usually encoded in the trnK tRNA gene intron. Probably assists in splicing its own and other chloroplast group II introns. In Liriodendron tulipifera (Tuliptree), this protein is Maturase K.